We begin with the raw amino-acid sequence, 236 residues long: Baculoviral IAP repeat-containing protein 8 (236 aa).

The BIR repeat unit spans residues 7–70 (RLITFGTWMY…KWYPGCKYLL (64 aa)). The Zn(2+) site is built by Cys39, Cys42, His59, and Cys66. The RING-type zinc-finger motif lies at 189–224 (CKICMDRHIAVVFIPCGHLVTCKQCAEAVDRCPMCS).

The protein belongs to the IAP family. In terms of assembly, binds to caspase-9.

It localises to the cytoplasm. Protects against apoptosis mediated by BAX. This is Baculoviral IAP repeat-containing protein 8 (BIRC8) from Pan troglodytes (Chimpanzee).